Consider the following 243-residue polypeptide: DUF724 domain-containing protein 5 (243 aa).

Residues 1 to 24 are compositionally biased toward basic and acidic residues; that stretch reads MREKHYSEDNSRKRKRGELEHNSD. The disordered stretch occupies residues 1–51; that stretch reads MREKHYSEDNSRKRKRGELEHNSDLNETVLPSDWTPDPVKNFAADDDDEET. One can recognise a DUF724 domain in the interval 59 to 243; it reads VLPFVKKSPV…DLGVELEDVE (185 aa). A coiled-coil region spans residues 174–223; that stretch reads KEMKDESSKKHKAEQEFGEMERKILEVKNKVLELQKQEAALEKQKDATYE.

Homodimer. In terms of tissue distribution, expressed in leaves, flowers and siliques.

Its subcellular location is the nucleus. In terms of biological role, may be involved in the polar growth of plant cells via transportation of RNAs. This is DUF724 domain-containing protein 5 from Arabidopsis thaliana (Mouse-ear cress).